Reading from the N-terminus, the 217-residue chain is 3,4-dihydroxy-2-butanone 4-phosphate synthase (217 aa).

D-ribulose 5-phosphate is bound by residues 37–38 (RE), Asp42, 150–154 (RRGHT), and Glu174. Glu38 serves as a coordination point for Mg(2+). His153 contributes to the Mg(2+) binding site.

It belongs to the DHBP synthase family. As to quaternary structure, homodimer. Requires Mg(2+) as cofactor. Mn(2+) is required as a cofactor.

The catalysed reaction is D-ribulose 5-phosphate = (2S)-2-hydroxy-3-oxobutyl phosphate + formate + H(+). It participates in cofactor biosynthesis; riboflavin biosynthesis; 2-hydroxy-3-oxobutyl phosphate from D-ribulose 5-phosphate: step 1/1. Its function is as follows. Catalyzes the conversion of D-ribulose 5-phosphate to formate and 3,4-dihydroxy-2-butanone 4-phosphate. The chain is 3,4-dihydroxy-2-butanone 4-phosphate synthase from Shewanella woodyi (strain ATCC 51908 / MS32).